We begin with the raw amino-acid sequence, 295 residues long: RNA polymerase sigma-C factor (295 aa).

The Polymerase core binding motif lies at 73–86 (DLIQEANIGLMKAV). The H-T-H motif DNA-binding region spans 250 to 269 (LSELGEHFGFSRERARQLEI).

The protein belongs to the sigma-70 factor family.

In terms of biological role, sigma factors are initiation factors that promote the attachment of RNA polymerase to specific initiation sites and are then released. This sigma factor is essential for normal fruiting body formation. The protein is RNA polymerase sigma-C factor (sigC) of Myxococcus xanthus.